The sequence spans 399 residues: Phosphoglycerate kinase (399 aa).

Substrate contacts are provided by residues Asp22–Asn24, Arg37, His60–Arg63, Arg119, and Arg152. Residues Lys202, Glu324, and Gly354–Thr357 contribute to the ATP site.

Belongs to the phosphoglycerate kinase family. In terms of assembly, monomer.

The protein localises to the cytoplasm. It catalyses the reaction (2R)-3-phosphoglycerate + ATP = (2R)-3-phospho-glyceroyl phosphate + ADP. It participates in carbohydrate degradation; glycolysis; pyruvate from D-glyceraldehyde 3-phosphate: step 2/5. This chain is Phosphoglycerate kinase, found in Sinorhizobium medicae (strain WSM419) (Ensifer medicae).